The primary structure comprises 981 residues: Translation initiation factor IF-2 (981 aa).

Residues 31-370 form a disordered region; it reads FVKSASSTVE…SKRAKRAEYE (340 aa). Positions 64 to 87 are enriched in low complexity; that stretch reads GAAAPAARPAAKPGAPSPSAAKPG. The span at 88–111 shows a compositional bias: pro residues; it reads GPRPGPKPAAPAPAAPAAPAPAAP. Residues 112 to 121 are compositionally biased toward low complexity; the sequence is AAPAAAAPAA. Residues 136 to 145 are compositionally biased toward pro residues; sequence PAQPARPAPA. The span at 146 to 165 shows a compositional bias: low complexity; it reads APAASAPAAPAAPAAPSTGA. Residues 256-269 show a composition bias toward pro residues; the sequence is RPSPGSMPPRPNPG. The segment covering 270 to 279 has biased composition (low complexity); the sequence is AMPARSARPA. Residues 280–339 are compositionally biased toward gly residues; it reads PGGGGRPGRPGGAPGGRPGGGGGGYRGGGAPGAGAGAGAPGGAAPAGGFRGRPGGGGRPG. The segment covering 356-365 has biased composition (basic residues); the sequence is RRGRKSKRAK. Residues 477-649 form the tr-type G domain; sequence SRPPVVTVMG…VLLTADASLD (173 aa). The segment at 486–493 is G1; that stretch reads GHVDHGKT. A GTP-binding site is contributed by 486 to 493; sequence GHVDHGKT. The interval 511–515 is G2; it reads GITQH. The segment at 536–539 is G3; the sequence is DTPG. GTP is bound by residues 536-540 and 590-593; these read DTPGH and NKID. Residues 590–593 are G4; that stretch reads NKID. Residues 626–628 are G5; it reads SAK.

The protein belongs to the TRAFAC class translation factor GTPase superfamily. Classic translation factor GTPase family. IF-2 subfamily.

The protein localises to the cytoplasm. One of the essential components for the initiation of protein synthesis. Protects formylmethionyl-tRNA from spontaneous hydrolysis and promotes its binding to the 30S ribosomal subunits. Also involved in the hydrolysis of GTP during the formation of the 70S ribosomal complex. In Rhodococcus erythropolis (strain PR4 / NBRC 100887), this protein is Translation initiation factor IF-2.